The following is a 195-amino-acid chain: Small ribosomal subunit protein uS4 (195 aa).

In terms of domain architecture, S4 RNA-binding spans 92 to 152 (SRLDNIVYRL…EKHKHKANKN (61 aa)).

This sequence belongs to the universal ribosomal protein uS4 family. As to quaternary structure, part of the 30S ribosomal subunit. Contacts protein S5. The interaction surface between S4 and S5 is involved in control of translational fidelity.

One of the primary rRNA binding proteins, it binds directly to 16S rRNA where it nucleates assembly of the body of the 30S subunit. Functionally, with S5 and S12 plays an important role in translational accuracy. In Karelsulcia muelleri (strain GWSS) (Sulcia muelleri), this protein is Small ribosomal subunit protein uS4.